The chain runs to 257 residues: Trans-aconitate 2-methyltransferase (257 aa).

This sequence belongs to the methyltransferase superfamily. Tam family.

The protein resides in the cytoplasm. The catalysed reaction is trans-aconitate + S-adenosyl-L-methionine = (E)-3-(methoxycarbonyl)pent-2-enedioate + S-adenosyl-L-homocysteine. Catalyzes the S-adenosylmethionine monomethyl esterification of trans-aconitate. The polypeptide is Trans-aconitate 2-methyltransferase (Sinorhizobium fredii (strain NBRC 101917 / NGR234)).